The sequence spans 161 residues: Allophycocyanin beta chain (161 aa).

N71 carries the post-translational modification N4-methylasparagine. C81 is a (2R,3E)-phycocyanobilin binding site.

It belongs to the phycobiliprotein family. In terms of assembly, heterodimer of an alpha and a beta chain. In terms of processing, contains one covalently linked phycocyanobilin chromophore.

Its subcellular location is the cellular thylakoid membrane. Functionally, light-harvesting photosynthetic bile pigment-protein from the phycobiliprotein complex. Allophycocyanin has a maximum absorption at approximately 650 nanometers. The sequence is that of Allophycocyanin beta chain (apcB) from Arthrospira platensis (Spirulina platensis).